Here is a 338-residue protein sequence, read N- to C-terminus: Ketol-acid reductoisomerase (NADP(+)) (338 aa).

The region spanning 1–181 is the KARI N-terminal Rossmann domain; the sequence is MRVFYDKDCD…GGGRTGIIET (181 aa). Residues 24–27, arginine 47, serine 50, threonine 52, and 82–85 each bind NADP(+); these read YGSQ and DEFQ. Histidine 107 is an active-site residue. An NADP(+)-binding site is contributed by glycine 133. The KARI C-terminal knotted domain occupies 182-327; sequence TFKDETETDL…EKLRAMMPWI (146 aa). Residues aspartate 190, glutamate 194, glutamate 226, and glutamate 230 each coordinate Mg(2+). Serine 251 provides a ligand contact to substrate.

The protein belongs to the ketol-acid reductoisomerase family. Mg(2+) serves as cofactor.

It catalyses the reaction (2R)-2,3-dihydroxy-3-methylbutanoate + NADP(+) = (2S)-2-acetolactate + NADPH + H(+). The catalysed reaction is (2R,3R)-2,3-dihydroxy-3-methylpentanoate + NADP(+) = (S)-2-ethyl-2-hydroxy-3-oxobutanoate + NADPH + H(+). It participates in amino-acid biosynthesis; L-isoleucine biosynthesis; L-isoleucine from 2-oxobutanoate: step 2/4. It functions in the pathway amino-acid biosynthesis; L-valine biosynthesis; L-valine from pyruvate: step 2/4. Its function is as follows. Involved in the biosynthesis of branched-chain amino acids (BCAA). Catalyzes an alkyl-migration followed by a ketol-acid reduction of (S)-2-acetolactate (S2AL) to yield (R)-2,3-dihydroxy-isovalerate. In the isomerase reaction, S2AL is rearranged via a Mg-dependent methyl migration to produce 3-hydroxy-3-methyl-2-ketobutyrate (HMKB). In the reductase reaction, this 2-ketoacid undergoes a metal-dependent reduction by NADPH to yield (R)-2,3-dihydroxy-isovalerate. The protein is Ketol-acid reductoisomerase (NADP(+)) of Pseudomonas paraeruginosa (strain DSM 24068 / PA7) (Pseudomonas aeruginosa (strain PA7)).